Consider the following 216-residue polypeptide: Phosphoenolpyruvate guanylyltransferase (216 aa).

Residues Thr-150, Gly-165, and Ser-168 each coordinate phosphoenolpyruvate.

Belongs to the CofC family.

The catalysed reaction is phosphoenolpyruvate + GTP + H(+) = enolpyruvoyl-2-diphospho-5'-guanosine + diphosphate. The protein operates within cofactor biosynthesis; coenzyme F420 biosynthesis. Functionally, guanylyltransferase that catalyzes the activation of phosphoenolpyruvate (PEP) as enolpyruvoyl-2-diphospho-5'-guanosine, via the condensation of PEP with GTP. It is involved in the biosynthesis of coenzyme F420, a hydride carrier cofactor. In Mycobacterium leprae (strain Br4923), this protein is Phosphoenolpyruvate guanylyltransferase.